The primary structure comprises 150 residues: Cytochrome c-type biogenesis protein CcmE (150 aa).

Topologically, residues 1 to 9 (MRNLKKTRR) are cytoplasmic. A helical; Signal-anchor for type II membrane protein transmembrane segment spans residues 10–30 (IQILLVAGGALVLSTALIGYG). Topologically, residues 31-150 (MRDGINFFRA…VYRDPAQPEG (120 aa)) are periplasmic. Heme-binding residues include H123 and Y127.

It belongs to the CcmE/CycJ family.

It localises to the cell inner membrane. In terms of biological role, heme chaperone required for the biogenesis of c-type cytochromes. Transiently binds heme delivered by CcmC and transfers the heme to apo-cytochromes in a process facilitated by CcmF and CcmH. This chain is Cytochrome c-type biogenesis protein CcmE, found in Rhodobacter capsulatus (strain ATCC BAA-309 / NBRC 16581 / SB1003).